A 392-amino-acid chain; its full sequence is O-phospho-L-seryl-tRNA:Cys-tRNA synthase (392 aa).

Pyridoxal 5'-phosphate contacts are provided by residues 84-85 (AR), asparagine 191, and 214-216 (SGH). N6-(pyridoxal phosphate)lysine is present on lysine 217.

This sequence belongs to the SepCysS family. Homodimer. Interacts with SepRS. It depends on pyridoxal 5'-phosphate as a cofactor.

The catalysed reaction is O-phospho-L-seryl-tRNA(Cys) + hydrogen sulfide + H(+) = L-cysteinyl-tRNA(Cys) + phosphate. Its function is as follows. Converts O-phospho-L-seryl-tRNA(Cys) (Sep-tRNA(Cys)) to L-cysteinyl-tRNA(Cys) (Cys-tRNA(Cys)). The chain is O-phospho-L-seryl-tRNA:Cys-tRNA synthase from Methanopyrus kandleri (strain AV19 / DSM 6324 / JCM 9639 / NBRC 100938).